A 233-amino-acid polypeptide reads, in one-letter code: Large ribosomal subunit protein uL1 (233 aa).

The protein belongs to the universal ribosomal protein uL1 family. In terms of assembly, part of the 50S ribosomal subunit.

Functionally, binds directly to 23S rRNA. The L1 stalk is quite mobile in the ribosome, and is involved in E site tRNA release. Protein L1 is also a translational repressor protein, it controls the translation of the L11 operon by binding to its mRNA. The polypeptide is Large ribosomal subunit protein uL1 (Shewanella loihica (strain ATCC BAA-1088 / PV-4)).